Here is a 260-residue protein sequence, read N- to C-terminus: Magnesium dechelatase SGRL, chloroplastic (260 aa).

A chloroplast-targeting transit peptide spans 1–45; the sequence is MACYIVPYYHHPVLSHPNREIFSHRHHHHHRFCNNLLNRRISVPR.

Belongs to the staygreen family. As to quaternary structure, interacts with the light harvesting complex II (LHCII). Interacts with the chlorophyll catabolic enzymes (CCEs) NYC1, NOL, PAO and RCCR. In terms of tissue distribution, expressed in cotyledons, pollen and young leaves.

The protein resides in the plastid. It is found in the chloroplast thylakoid. The catalysed reaction is chlorophyllide a + 2 H(+) = pheophorbide a + Mg(2+). Functionally, magnesium chelatase involved in chlorophyll a degradation in the chlorophyll-protein complexes of photosystem I (PSI) and photosystem II (PSII). Contributes to the degradation of PSI and PSII in the thylakoid membranes. Recombinant SGRL possesses high dechelating activity against chlorophyllide a, very low activity against chlorophyll a, and no activity against chlorophyll b. Contributes to abiotic stress-induced chlorophyll degradation and leaf yellowing during vegetative plant growth. The protein is Magnesium dechelatase SGRL, chloroplastic of Arabidopsis thaliana (Mouse-ear cress).